The chain runs to 124 residues: UPF0231 protein Shewana3_0655 (124 aa).

It belongs to the UPF0231 family.

In Shewanella sp. (strain ANA-3), this protein is UPF0231 protein Shewana3_0655.